The primary structure comprises 509 residues: Bifunctional pantoate ligase/cytidylate kinase (509 aa).

The segment at 1-275 (MKKLIIRKTE…CGETRLIDHV (275 aa)) is pantoate--beta-alanine ligase. ATP is bound at residue 29–36 (MGNLHDGH). His-36 serves as the catalytic Proton donor. Gln-61 contacts (R)-pantoate. Gln-61 lines the beta-alanine pocket. 149 to 152 (GEKD) is a binding site for ATP. Gln-155 contributes to the (R)-pantoate binding site. 186 to 189 (LSSR) is a binding site for ATP. Residues 276–509 (FLMKRRPIIA…DKIPKESEIK (234 aa)) form a cytidylate kinase region.

The protein in the N-terminal section; belongs to the pantothenate synthetase family. This sequence in the C-terminal section; belongs to the cytidylate kinase family. Type 1 subfamily.

The protein resides in the cytoplasm. It carries out the reaction (R)-pantoate + beta-alanine + ATP = (R)-pantothenate + AMP + diphosphate + H(+). The catalysed reaction is CMP + ATP = CDP + ADP. It catalyses the reaction dCMP + ATP = dCDP + ADP. It participates in cofactor biosynthesis; (R)-pantothenate biosynthesis; (R)-pantothenate from (R)-pantoate and beta-alanine: step 1/1. Functionally, catalyzes the condensation of pantoate with beta-alanine in an ATP-dependent reaction via a pantoyl-adenylate intermediate. Catalyzes the transfer of a phosphate group from ATP to either CMP or dCMP to form CDP or dCDP and ADP, respectively. This chain is Bifunctional pantoate ligase/cytidylate kinase, found in Prochlorococcus marinus (strain AS9601).